The primary structure comprises 205 residues: Peptidyl-tRNA hydrolase (205 aa).

A tRNA-binding site is contributed by Y14. H19 (proton acceptor) is an active-site residue. TRNA is bound by residues Y64, N66, and N112.

It belongs to the PTH family. As to quaternary structure, monomer.

The protein localises to the cytoplasm. The enzyme catalyses an N-acyl-L-alpha-aminoacyl-tRNA + H2O = an N-acyl-L-amino acid + a tRNA + H(+). In terms of biological role, hydrolyzes ribosome-free peptidyl-tRNAs (with 1 or more amino acids incorporated), which drop off the ribosome during protein synthesis, or as a result of ribosome stalling. Functionally, catalyzes the release of premature peptidyl moieties from peptidyl-tRNA molecules trapped in stalled 50S ribosomal subunits, and thus maintains levels of free tRNAs and 50S ribosomes. The sequence is that of Peptidyl-tRNA hydrolase from Parvibaculum lavamentivorans (strain DS-1 / DSM 13023 / NCIMB 13966).